Here is a 506-residue protein sequence, read N- to C-terminus: Tetratricopeptide repeat protein 8 (506 aa).

The tract at residues 83–112 is disordered; it reads RPGTSFARPKTSAKGVNPILRPTTNAGRPL. TPR repeat units follow at residues 217–250, 251–283, 284–317, 319–351, 353–385, 388–421, 423–455, and 456–489; these read YYWKNQLAKCYLRLGMLQDATKQLQSSLEQKKLI, ETFALLSKAYNRVDQPMAALKTYSAGLEVFPEN, VTMLTGMARVQEALGEYDESVKLYKRVLDAESNN, EAIACVATTYYYGGKPELAMRYYRRILQMGVSS, ELFLNIGLCCMAAQQFDFALSSILRAQSTMTDD, ADVWYNIGQILVDIGDLVSAARSFRIALSHDPDH, ESLVNLGILKHREGKIDEARSLYSSATSKNPYM, and FEGNYNLGLVSFTQGKYHECRELIEKALAAFPEH.

In terms of assembly, part of BBSome complex, that contains at least bbs-1, bbs-2, bbs-4, bbs-5, osm-12, bbs-8/ttc-8 and bbs-9. Expressed in head and tail neurons. Expressed in ciliated male tail-neurons. Expressed in thermosensory and CO(2) sensory AFD neurons.

It localises to the cell projection. The protein resides in the cilium. The protein localises to the cytoplasm. It is found in the cytoskeleton. Its subcellular location is the cilium basal body. It localises to the cilium axoneme. Component of the BBSome complex. The BBSome complex is thought to function as a coat complex required for sorting of specific membrane proteins to the primary cilia. The BBSome complex is required for ciliogenesis but is dispensable for centriolar satellite function. Required for proper BBSome complex assembly and its ciliary localization. Required for cilia biogenesis and both the assembly and movement of intraflagellar transport proteins along the ciliary axoneme. Plays a role in guanylyl cyclase localization in the ring-like structures at the base of the finger compartment in AFD sensory neurons. In Caenorhabditis elegans, this protein is Tetratricopeptide repeat protein 8.